The primary structure comprises 364 residues: D-alanine--D-alanine ligase (364 aa).

The region spanning 134–347 is the ATP-grasp domain; sequence RRLACINGLK…YPDLLDELIN (214 aa). 167 to 222 contributes to the ATP binding site; the sequence is ASEFGWPLFVKPCSLGSSVGIHKANNMDELNAAVADALRYDEEILVEEFIVGREIE. The Mg(2+) site is built by aspartate 300, glutamate 314, and asparagine 316.

Belongs to the D-alanine--D-alanine ligase family. Mg(2+) serves as cofactor. Requires Mn(2+) as cofactor.

Its subcellular location is the cytoplasm. It catalyses the reaction 2 D-alanine + ATP = D-alanyl-D-alanine + ADP + phosphate + H(+). The protein operates within cell wall biogenesis; peptidoglycan biosynthesis. In terms of biological role, cell wall formation. The polypeptide is D-alanine--D-alanine ligase (Legionella pneumophila (strain Lens)).